A 425-amino-acid chain; its full sequence is ADP-ribose glycohydrolase MACROD2 (425 aa).

In terms of domain architecture, Macro spans 59 to 240; that stretch reads QETSQVKKSL…IYKKKMNEFF (182 aa). Substrate-binding positions include 77 to 79, 90 to 92, and 97 to 102; these read GDI, AAN, and GGGGVD. Residue lysine 170 forms a Glycyl lysine isopeptide (Lys-Gly) (interchain with G-Cter in ubiquitin) linkage. Substrate-binding positions include 185 to 191 and phenylalanine 224; that span reads ISTGIYG. The disordered stretch occupies residues 243–425; that stretch reads DDNNEEEEDV…EAKEQRNGTK (183 aa). Residues 244 to 262 are compositionally biased toward acidic residues; it reads DNNEEEEDVEMKEDSDENG. Over residues 302 to 343 the composition is skewed to basic and acidic residues; sequence EDFAKDENITKGGEVTDHSVRDQDHPDGQENDSTKNEIKIET. Residues 344 to 360 show a composition bias toward polar residues; that stretch reads ESQSSYMETEELSSNQE. Composition is skewed to basic and acidic residues over residues 381–391 and 415–425; these read EGEKAPGEDTP and DEAKEQRNGTK.

The protein belongs to the MacroD-type family. MacroD1/2-like subfamily. Interacts with ADP-ribosylated PARP1.

The protein resides in the nucleus. The enzyme catalyses 2''-O-acetyl-ADP-D-ribose + H2O = ADP-D-ribose + acetate + H(+). It catalyses the reaction 4-O-(ADP-D-ribosyl)-L-aspartyl-[protein] + H2O = L-aspartyl-[protein] + ADP-D-ribose + H(+). It carries out the reaction 5-O-(ADP-D-ribosyl)-L-glutamyl-[protein] + H2O = L-glutamyl-[protein] + ADP-D-ribose + H(+). The catalysed reaction is alpha-NAD(+) + H2O = ADP-D-ribose + nicotinamide + H(+). Subject to product inhibition by ADP-ribose. Its function is as follows. Removes ADP-ribose from aspartate and glutamate residues in proteins bearing a single ADP-ribose moiety. Inactive towards proteins bearing poly-ADP-ribose. Deacetylates O-acetyl-ADP ribose, a signaling molecule generated by the deacetylation of acetylated lysine residues in histones and other proteins. This is ADP-ribose glycohydrolase MACROD2 from Homo sapiens (Human).